The following is a 467-amino-acid chain: Argininosuccinate lyase (467 aa).

Belongs to the lyase 1 family. Argininosuccinate lyase subfamily.

The protein localises to the cytoplasm. The enzyme catalyses 2-(N(omega)-L-arginino)succinate = fumarate + L-arginine. The protein operates within amino-acid biosynthesis; L-arginine biosynthesis; L-arginine from L-ornithine and carbamoyl phosphate: step 3/3. The polypeptide is Argininosuccinate lyase (Rhizobium etli (strain ATCC 51251 / DSM 11541 / JCM 21823 / NBRC 15573 / CFN 42)).